Consider the following 196-residue polypeptide: Large ribosomal subunit protein eL15 (196 aa).

Residues 162–172 (RGKTSAGRRAR) are compositionally biased toward basic residues. A disordered region spans residues 162-196 (RGKTSAGRRARGLQNRGKGTEGLRPSTNADKRNKS).

Belongs to the eukaryotic ribosomal protein eL15 family.

This is Large ribosomal subunit protein eL15 from Halobacterium salinarum (strain ATCC 29341 / DSM 671 / R1).